Consider the following 879-residue polypeptide: Band 4.1-like protein 1 (879 aa).

The disordered stretch occupies residues 1–88 (MTTETGPDSE…TPSKAQKSPQ (88 aa)). Over residues 17-35 (ETPQQPEAAAAVTTPVTPA) the composition is skewed to low complexity. Position 30 is a phosphothreonine (Thr30). Residues 38–50 (SHPETNSNEKHLT) are compositionally biased toward basic and acidic residues. Residue Ser75 is modified to Phosphoserine. Positions 76–87 (ERTTPSKAQKSP) are enriched in polar residues. At Thr79 the chain carries Phosphothreonine. In terms of domain architecture, FERM spans 97-378 (AICRVTLLDA…EHHTFFRLVS (282 aa)). Phosphotyrosine is present on Tyr343. Phosphoserine occurs at positions 378, 430, 437, 461, and 466. Residues 381-482 (PPPKGFLVMG…VRTPTKIKEL (102 aa)) are hydrophilic. The disordered stretch occupies residues 428-501 (SRSLDGAEFS…HKQEFLDKPE (74 aa)). Basic and acidic residues predominate over residues 444 to 501 (ENHDAGPEGDKREDDAESGGRRSEAEEGEVRTPTKIKELKPEQETTPRHKQEFLDKPE). Thr475 is subject to Phosphothreonine. Residues 483 to 541 (KPEQETTPRHKQEFLDKPEDVLLKHQASINELKRTLKEPNSKLIHRDRDWDRERRLPSS) form a spectrin--actin-binding region. Ser510 is subject to Phosphoserine. The span at 514–538 (LKRTLKEPNSKLIHRDRDWDRERRL) shows a compositional bias: basic and acidic residues. The tract at residues 514-594 (LKRTLKEPNS…QDQERDAVFL (81 aa)) is disordered. 4 positions are modified to phosphoserine: Ser540, Ser541, Ser544, and Ser546. Thr550 is subject to Phosphothreonine. Basic and acidic residues predominate over residues 550-577 (TPEKASERAGLREGSEEKVKPPRPRAPE). Phosphoserine occurs at positions 564, 578, 639, 648, 650, 665, 666, 671, 677, and 684. The interval 657–696 (FAQDLKGPSSQEDESGGLEDSPDRGACSTPEMPQFESVKA) is disordered. Thr685 bears the Phosphothreonine mark. Residues Ser721, Ser782, and Ser868 each carry the phosphoserine modification. The tract at residues 743 to 879 (PCITTETIST…EERDKKPQES (137 aa)) is C-terminal (CTD).

In terms of assembly, interacts with AGAP2. In terms of tissue distribution, highest expression in brain, also present in kidney, olfactory epithelium, retina, sensory ganglia, gastrointestinal tract (only enteric neurons) and lung.

It localises to the cytoplasm. It is found in the cytoskeleton. May function to confer stability and plasticity to neuronal membrane via multiple interactions, including the spectrin-actin-based cytoskeleton, integral membrane channels and membrane-associated guanylate kinases. The protein is Band 4.1-like protein 1 of Mus musculus (Mouse).